A 116-amino-acid polypeptide reads, in one-letter code: Staphylococcal complement inhibitor (116 aa).

An N-terminal signal peptide occupies residues 1-31 (MKIRKSILAGTLAIVLASPLVTNLDKNEAQA). The tract at residues 62-79 (LATGSLNTYYKRTIKISG) is essential for activity.

This sequence belongs to the SCIN family.

Its subcellular location is the secreted. Functionally, involved in countering the first line of host defense mechanisms. Efficiently inhibits opsonization, phagocytosis and killing of S.aureus by human neutrophils. Acts by binding and stabilizing human C3 convertases (C4b2a and C3bBb), leading to their inactivation. The convertases are no longer able to cleave complement C3, therefore preventing further C3b deposition on the bacterial surface and phagocytosis of the bacterium. Also prevents C5a-induced neutrophil responses. The polypeptide is Staphylococcal complement inhibitor (scn) (Staphylococcus aureus (strain Mu50 / ATCC 700699)).